The chain runs to 420 residues: 20-oxo-5-O-mycaminosyltylactone 23-monooxygenase (420 aa).

The interval 1–28 is disordered; it reads MSSSGDARPSQKGILLPAARANDTDEAA. 5 residues coordinate heme: His118, Arg122, Arg311, His367, and Cys369.

It belongs to the cytochrome P450 family.

It carries out the reaction 20-oxo-5-O-beta-D-mycaminosyltylonolide + 2 reduced [2Fe-2S]-[ferredoxin] + O2 + 2 H(+) = 5-O-beta-D-mycaminosyltylonolide + 2 oxidized [2Fe-2S]-[ferredoxin] + H2O. The protein operates within antibiotic biosynthesis; tylosin biosynthesis. In terms of biological role, involved in the biosynthesis of the complex macrolide antibiotic tylosin. Catalyzes the hydroxylation of 20-oxo-5-O-beta-mycaminosyltylactone at the C-23 position to yield 5-O-beta-mycaminosyltylonolide. In Streptomyces fradiae (Streptomyces roseoflavus), this protein is 20-oxo-5-O-mycaminosyltylactone 23-monooxygenase.